Consider the following 430-residue polypeptide: Histidinol dehydrogenase (430 aa).

Substrate contacts are provided by Ser-237, Gln-259, and His-262. Residues Gln-259 and His-262 each coordinate Zn(2+). Active-site proton acceptor residues include Glu-327 and His-328. The substrate site is built by His-328, Asp-361, Glu-415, and His-420. Asp-361 lines the Zn(2+) pocket. His-420 contacts Zn(2+).

The protein belongs to the histidinol dehydrogenase family. Zn(2+) is required as a cofactor.

It carries out the reaction L-histidinol + 2 NAD(+) + H2O = L-histidine + 2 NADH + 3 H(+). The protein operates within amino-acid biosynthesis; L-histidine biosynthesis; L-histidine from 5-phospho-alpha-D-ribose 1-diphosphate: step 9/9. Catalyzes the sequential NAD-dependent oxidations of L-histidinol to L-histidinaldehyde and then to L-histidine. The sequence is that of Histidinol dehydrogenase from Mesorhizobium japonicum (strain LMG 29417 / CECT 9101 / MAFF 303099) (Mesorhizobium loti (strain MAFF 303099)).